We begin with the raw amino-acid sequence, 512 residues long: ATP synthase subunit beta 2 (512 aa).

Glycine 174–threonine 181 contacts ATP. Positions arginine 479–alanine 494 are enriched in basic and acidic residues. The disordered stretch occupies residues arginine 479–arginine 512.

The protein belongs to the ATPase alpha/beta chains family. As to quaternary structure, F-type ATPases have 2 components, CF(1) - the catalytic core - and CF(0) - the membrane proton channel. CF(1) has five subunits: alpha(3), beta(3), gamma(1), delta(1), epsilon(1). CF(0) has three main subunits: a(1), b(2) and c(9-12). The alpha and beta chains form an alternating ring which encloses part of the gamma chain. CF(1) is attached to CF(0) by a central stalk formed by the gamma and epsilon chains, while a peripheral stalk is formed by the delta and b chains.

The protein resides in the cell inner membrane. It carries out the reaction ATP + H2O + 4 H(+)(in) = ADP + phosphate + 5 H(+)(out). Its function is as follows. Produces ATP from ADP in the presence of a proton gradient across the membrane. The catalytic sites are hosted primarily by the beta subunits. The sequence is that of ATP synthase subunit beta 2 from Burkholderia thailandensis (strain ATCC 700388 / DSM 13276 / CCUG 48851 / CIP 106301 / E264).